Reading from the N-terminus, the 190-residue chain is MSIKEDKWIRKMAQTHGMIEPFADGQVNIDAETGEKLISYGLSSYGYDLRLSREFKVFTNVYNSLVDPKHFTEDTFISITDDVCIIPPNSFALAHSVEYFRIPRNVLTMCIGKSTYARCGLIVNVTPFEPEWEGYVTIEISNTTPLPAKIYANEGIAQVLFFEADEMCEVSYAERKGKYQKQQGITVPFV.

113–118 serves as a coordination point for dCTP; the sequence is KSTYAR. The active-site Proton donor/acceptor is E139. The dCTP site is built by Q158, Y172, K181, and Q182.

The protein belongs to the dCTP deaminase family. Homotrimer.

It catalyses the reaction dCTP + H2O + H(+) = dUTP + NH4(+). It participates in pyrimidine metabolism; dUMP biosynthesis; dUMP from dCTP (dUTP route): step 1/2. Catalyzes the deamination of dCTP to dUTP. The protein is dCTP deaminase of Chlamydia felis (strain Fe/C-56) (Chlamydophila felis).